We begin with the raw amino-acid sequence, 148 residues long: Ubiquitin-conjugating enzyme E2 28 (148 aa).

The region spanning 1 to 147 (MASKRILKEL…ARSWTQKYAM (147 aa)) is the UBC core domain. The active-site Glycyl thioester intermediate is the Cys85.

The protein belongs to the ubiquitin-conjugating enzyme family. Interacts with SINAT5. In terms of tissue distribution, expressed in seeds, pistils, siliques, hypocotyls and leaves.

It carries out the reaction S-ubiquitinyl-[E1 ubiquitin-activating enzyme]-L-cysteine + [E2 ubiquitin-conjugating enzyme]-L-cysteine = [E1 ubiquitin-activating enzyme]-L-cysteine + S-ubiquitinyl-[E2 ubiquitin-conjugating enzyme]-L-cysteine.. It participates in protein modification; protein ubiquitination. In terms of biological role, accepts the ubiquitin from the E1 complex and catalyzes its covalent attachment to other proteins. This is Ubiquitin-conjugating enzyme E2 28 from Arabidopsis thaliana (Mouse-ear cress).